We begin with the raw amino-acid sequence, 478 residues long: Glutamyl-tRNA(Gln) amidotransferase subunit A 2 (478 aa).

Residues Lys-79 and Ser-154 each act as charge relay system in the active site. The active-site Acyl-ester intermediate is Ser-178.

Belongs to the amidase family. GatA subfamily. Heterotrimer of A, B and C subunits.

The enzyme catalyses L-glutamyl-tRNA(Gln) + L-glutamine + ATP + H2O = L-glutaminyl-tRNA(Gln) + L-glutamate + ADP + phosphate + H(+). In terms of biological role, allows the formation of correctly charged Gln-tRNA(Gln) through the transamidation of misacylated Glu-tRNA(Gln) in organisms which lack glutaminyl-tRNA synthetase. The reaction takes place in the presence of glutamine and ATP through an activated gamma-phospho-Glu-tRNA(Gln). This chain is Glutamyl-tRNA(Gln) amidotransferase subunit A 2 (gatA2), found in Clostridium acetobutylicum (strain ATCC 824 / DSM 792 / JCM 1419 / IAM 19013 / LMG 5710 / NBRC 13948 / NRRL B-527 / VKM B-1787 / 2291 / W).